A 439-amino-acid polypeptide reads, in one-letter code: Hydroxyornithine transacylase SID3 (439 aa).

The PTS1-type peroxisomal targeting signal signature appears at 437-439 (SKL).

The protein belongs to the lysine N-acyltransferase mbtK family.

The protein localises to the peroxisome. Its pathway is siderophore biosynthesis. Its function is as follows. Hydroxyornithine transacylase; part of the gene cluster that mediates the biosynthesis of hydroxamate-containing siderophores that play a critical role in virulence via intracellular iron acquisition during macrophage infection. In Ajellomyces capsulatus (Darling's disease fungus), this protein is Hydroxyornithine transacylase SID3.